Reading from the N-terminus, the 549-residue chain is Cation/acetate symporter ActP (549 aa).

13 helical membrane passes run 32-54 (IQAI…WASK), 75-97 (GMAI…LVYT), 102-124 (GLIY…AERL), 145-167 (IRIL…QMVG), 182-204 (VAVV…LATT), 211-233 (AILL…NFNF), 263-285 (ALSL…MRFF), 298-320 (FYAT…GAIL), 361-383 (AVAF…SAVS), 404-423 (VSKI…GILF), 428-450 (IAFM…ILLS), 462-484 (LVGG…TIWV), and 494-516 (YPYE…LFSI).

This sequence belongs to the sodium:solute symporter (SSF) (TC 2.A.21) family.

Its subcellular location is the cell inner membrane. Transports acetate. In Photorhabdus laumondii subsp. laumondii (strain DSM 15139 / CIP 105565 / TT01) (Photorhabdus luminescens subsp. laumondii), this protein is Cation/acetate symporter ActP.